A 612-amino-acid chain; its full sequence is MENVKHIILVLSGKGGVGKSSVTTQLALSLHETPFYSRKLRIGVLDIDLTGPSIPRMFGMDAETHRIHQSSSGWVPVYTDETKEIGLMSLAFLLSSKNDSVVWRGPKKAAMIRQFVSDVNWGDIDYLLIDTPPGTSDEHLTIVESLLSVTSERPQLIDGAVMVTTPQNVATLDVKKEINFCQNLKIPILGVVENMSGFVCPHCSDCTNIFSKGGGEQLSNTYHLPFLGAVPIDPKFGELIESQSTEHPLIEHYKQLEVAKLFQKITQNMLDSLFHSPSLVLDKVLSGHRGRIWSVAVHPTLPLVATASEDKSVRVFQAQTGELIHVIDGYHTRSVRRVAWRPIDRPVLAIASFDATVSIYEKIDDDWECVAALEGHENEVKCVAWSHDGVYLATCSRDKSVWIWEAMEDDEFDCLAVLQEHTQDVKVVAWHPKDDLLVSGSYDNTIRFWRDDGDDWVQTCELTSHTSTVWALNFSPDGRLLASGDGEGEVFIWEKLVSNEDAARTPSTNILRPSLEEEWCLKAVLPRTFTEPVYTLGWKDDHTLCASGAEGTIGLFAYEDDVSTWHTVSLKEKAHDVYEINTIAWTNDSRLLSGGDDGLCNVWKLSEADQTA.

13-20 (GKGGVGKS) is an ATP binding site. [4Fe-4S] cluster-binding residues include C200 and C203. WD repeat units lie at residues 287 to 326 (GHRGRIWSVAVHPTLPLVATASEDKSVRVFQAQTGELIHV), 330 to 370 (YHTR…WECV), 375 to 414 (GHENEVKCVAWSHDGVYLATCSRDKSVWIWEAMEDDEFDC), 420 to 459 (EHTQDVKVVAWHPKDDLLVSGSYDNTIRFWRDDGDDWVQT), 464 to 503 (SHTSTVWALNFSPDGRLLASGDGEGEVFIWEKLVSNEDAA), 528 to 566 (TFTEPVYTLGWKDDHTLCASGAEGTIGLFAYEDDVSTWH), and 574 to 612 (AHDVYEINTIAWTNDSRLLSGGDDGLCNVWKLSEADQTA).

In the N-terminal section; belongs to the Mrp/NBP35 ATP-binding proteins family. NUBP2/CFD1 subfamily. The protein in the C-terminal section; belongs to the WD repeat CIA1 family. Heterotetramer of 2 nbp35 and 2 SJAG_02895 chains. [4Fe-4S] cluster serves as cofactor.

The protein localises to the cytoplasm. It is found in the nucleus. In terms of biological role, fusion protein of two essential components of the cytosolic iron-sulfur (Fe/S) protein assembly (CIA) machinery. Required for maturation of extramitochondrial Fe-S proteins. May form a heterotetramer with nubp35, functioning as a Fe-S scaffold complex, mediating the de novo assembly of an Fe-S cluster and its transfer to target apoproteins. The polypeptide is Probable cytosolic Fe-S cluster assembly factor SJAG_02895 (Schizosaccharomyces japonicus (strain yFS275 / FY16936) (Fission yeast)).